The sequence spans 2414 residues: Centrosome-associated protein CEP250 (2414 aa).

Coiled coils occupy residues 91 to 153 (EEPN…ELVR) and 248 to 357 (LVAK…VEEE). Disordered regions lie at residues 356 to 384 (EEDT…DPQD), 672 to 707 (AEEA…QETA), 1191 to 1212 (SRPE…DPDQ), 1269 to 1303 (EAQK…QNSL), 2050 to 2071 (AGAR…QERQ), 2194 to 2238 (ALEE…KERL), and 2275 to 2317 (RERR…GSSD). Polar residues predominate over residues 371–381 (QSDCNGLSQFD). A coiled-coil region spans residues 400–1165 (QQAVQDLRQQ…QLEALVAEQQ (766 aa)). Residues 684–704 (RGTREEKEELKDKLSEAHHQQ) are compositionally biased toward basic and acidic residues. 2 coiled-coil regions span residues 1237–2200 (LQKL…EQQS) and 2231–2290 (GVEE…ASRA). Low complexity predominate over residues 1280-1289 (QDLQRQLSQS). A compositionally biased stretch (polar residues) spans 2196–2209 (EEQQSGGPHSTSRA). The span at 2275-2286 (RERRKLKRDSVR) shows a compositional bias: basic and acidic residues. Serine 2292 bears the Phosphoserine mark. A compositionally biased stretch (low complexity) spans 2305–2317 (QQDGRGSQRGSSD). A coiled-coil region spans residues 2320–2345 (LVVELQREVALLRAQLALERKQRQDY). Residues serine 2389 and serine 2393 each carry the phosphoserine; by NEK2 modification. Residues 2390 to 2414 (LNQSLTSPGPCLLHPSLDTTQNTHR) form a disordered region.

As to quaternary structure, monomer and homodimer. Forms a complex in vitro with both NEK2 kinase and the PPP1CC catalytic subunit of protein phosphatase 1 (PP1). Interacts with CEP135. Interacts with CROCC/rootletin. Interacts with CNTLN. Interacts with NIN (via C-terminus). Post-translationally, differentially phosphorylated during cell cycle. Phosphorylation may regulate association/dissociation from centrosome. During M phase of mitosis, C-terminal part is phosphorylated by NEK2, suggesting that it may trigger the dissociation from the mitotic centrosome. Dephosphorylated in vitro by the PP1 phosphatase. As to expression, expressed in the retina.

Its subcellular location is the cytoplasm. It localises to the perinuclear region. The protein localises to the cytoskeleton. The protein resides in the microtubule organizing center. It is found in the centrosome. Its subcellular location is the centriole. It localises to the cilium basal body. The protein localises to the cell projection. The protein resides in the cilium. It is found in the photoreceptor outer segment. Its subcellular location is the photoreceptor inner segment. Plays an important role in centrosome cohesion during interphase. Recruits CCDC102B to the proximal ends of centrioles. Maintains centrosome cohesion by forming intercentriolar linkages. Accumulates at the proximal end of each centriole, forming supramolecular assemblies with viscous material properties that promote organelle cohesion. May be involved in ciliogenesis. This Mus musculus (Mouse) protein is Centrosome-associated protein CEP250 (Cep250).